Consider the following 154-residue polypeptide: 6,7-dimethyl-8-ribityllumazine synthase (154 aa).

Residues phenylalanine 22, 56 to 58 (AFE), and 80 to 82 (AVI) contribute to the 5-amino-6-(D-ribitylamino)uracil site. 85 to 86 (AT) is a binding site for (2S)-2-hydroxy-3-oxobutyl phosphate. Catalysis depends on histidine 88, which acts as the Proton donor. 5-amino-6-(D-ribitylamino)uracil is bound at residue phenylalanine 113. (2S)-2-hydroxy-3-oxobutyl phosphate is bound at residue arginine 127.

Belongs to the DMRL synthase family.

It catalyses the reaction (2S)-2-hydroxy-3-oxobutyl phosphate + 5-amino-6-(D-ribitylamino)uracil = 6,7-dimethyl-8-(1-D-ribityl)lumazine + phosphate + 2 H2O + H(+). It functions in the pathway cofactor biosynthesis; riboflavin biosynthesis; riboflavin from 2-hydroxy-3-oxobutyl phosphate and 5-amino-6-(D-ribitylamino)uracil: step 1/2. Catalyzes the formation of 6,7-dimethyl-8-ribityllumazine by condensation of 5-amino-6-(D-ribitylamino)uracil with 3,4-dihydroxy-2-butanone 4-phosphate. This is the penultimate step in the biosynthesis of riboflavin. The polypeptide is 6,7-dimethyl-8-ribityllumazine synthase (Clostridium botulinum (strain 657 / Type Ba4)).